Here is a 409-residue protein sequence, read N- to C-terminus: Probable type I inositol 1,4,5-trisphosphate 5-phosphatase (409 aa).

It belongs to the inositol 1,4,5-trisphosphate 5-phosphatase type I family.

The enzyme catalyses 1D-myo-inositol 1,4,5-trisphosphate + H2O = 1D-myo-inositol 1,4-bisphosphate + phosphate. It catalyses the reaction 1D-myo-inositol 1,3,4,5-tetrakisphosphate + H2O = 1D-myo-inositol 1,3,4-trisphosphate + phosphate. This chain is Probable type I inositol 1,4,5-trisphosphate 5-phosphatase (ipp-5), found in Caenorhabditis elegans.